We begin with the raw amino-acid sequence, 716 residues long: uncharacterized protein (716 aa).

2 disordered regions span residues 84 to 103 (SPSI…ERYP) and 153 to 189 (VTDE…SQGQ). The residue at position 97 (Ser-97) is a Phosphoserine. Glycyl lysine isopeptide (Lys-Gly) (interchain with G-Cter in SUMO2) cross-links involve residues Lys-201, Lys-204, Lys-237, Lys-283, and Lys-626.

This is an uncharacterized protein from Mus musculus (Mouse).